We begin with the raw amino-acid sequence, 456 residues long: RuvB-like helicase 1 (456 aa).

71 to 78 is an ATP binding site; that stretch reads GGAGTGKT.

This sequence belongs to the RuvB family. In terms of assembly, may form heterododecamers with RVB2. Component of the SWR1 chromatin remodeling complex, the INO80 chromatin remodeling complex, and of the R2TP complex.

The protein resides in the nucleus. The enzyme catalyses ATP + H2O = ADP + phosphate + H(+). Functionally, DNA helicase which participates in several chromatin remodeling complexes, including the SWR1 and the INO80 complexes. The SWR1 complex mediates the ATP-dependent exchange of histone H2A for the H2A variant HZT1 leading to transcriptional regulation of selected genes by chromatin remodeling. The INO80 complex remodels chromatin by shifting nucleosomes and is involved in DNA repair. Also involved in pre-rRNA processing. In Schizosaccharomyces pombe (strain 972 / ATCC 24843) (Fission yeast), this protein is RuvB-like helicase 1 (rvb1).